Consider the following 147-residue polypeptide: Nucleoside diphosphate kinase (147 aa).

ATP-binding residues include lysine 9, phenylalanine 57, arginine 85, threonine 91, arginine 102, and asparagine 112. The active-site Pros-phosphohistidine intermediate is the histidine 115.

It belongs to the NDK family. As to quaternary structure, homotetramer. Mg(2+) serves as cofactor.

Its subcellular location is the cytoplasm. It catalyses the reaction a 2'-deoxyribonucleoside 5'-diphosphate + ATP = a 2'-deoxyribonucleoside 5'-triphosphate + ADP. The catalysed reaction is a ribonucleoside 5'-diphosphate + ATP = a ribonucleoside 5'-triphosphate + ADP. Major role in the synthesis of nucleoside triphosphates other than ATP. The ATP gamma phosphate is transferred to the NDP beta phosphate via a ping-pong mechanism, using a phosphorylated active-site intermediate. This chain is Nucleoside diphosphate kinase, found in Kosmotoga olearia (strain ATCC BAA-1733 / DSM 21960 / TBF 19.5.1).